A 354-amino-acid chain; its full sequence is Probable L-ascorbate-6-phosphate lactonase UlaG (354 aa).

The protein belongs to the UlaG family. Requires a divalent metal cation as cofactor.

Its subcellular location is the cytoplasm. The catalysed reaction is L-ascorbate 6-phosphate + H2O = 3-dehydro-L-gulonate 6-phosphate. The protein operates within cofactor degradation; L-ascorbate degradation; D-xylulose 5-phosphate from L-ascorbate: step 1/4. In terms of biological role, probably catalyzes the hydrolysis of L-ascorbate-6-P into 3-keto-L-gulonate-6-P. Is essential for L-ascorbate utilization under anaerobic conditions. The chain is Probable L-ascorbate-6-phosphate lactonase UlaG from Shigella dysenteriae serotype 1 (strain Sd197).